The following is a 314-amino-acid chain: MTRKNYTSLTEFVLLGLADTLELQIILFLFFLVIYTLTVLGNLGMILLIRIDSQLHTPMYFFLANLSFVDVCNSTTITPKMLADLLSEKKTISFAGCFLQMYFFISLATTECILFGLMAYDRYAAICRPLLYSLIMSRTVYLKMAAGAFAAGLLNFMVNTSHVSSLSFCDSNVIHHFFCDSPPLFKLSCSDTILKESISSILAGVNIVGTLLVILSSYSYVLFSIFSMHSGEGRHRAFSTCASHLTAIILFYATCIYTYLRPSSSYSLNQDKVASVFYTVVIPMLNPLIYSLRSKEVKKALANVISRKRTSSFL.

Topologically, residues 1–25 are extracellular; it reads MTRKNYTSLTEFVLLGLADTLELQI. N-linked (GlcNAc...) asparagine glycosylation is present at Asn5. Residues 26-46 form a helical membrane-spanning segment; that stretch reads ILFLFFLVIYTLTVLGNLGMI. Residues 47-54 lie on the Cytoplasmic side of the membrane; that stretch reads LLIRIDSQ. Residues 55 to 75 form a helical membrane-spanning segment; sequence LHTPMYFFLANLSFVDVCNST. Residues 76–99 are Extracellular-facing; it reads TITPKMLADLLSEKKTISFAGCFL. Cys97 and Cys189 are joined by a disulfide. Residues 100-120 form a helical membrane-spanning segment; that stretch reads QMYFFISLATTECILFGLMAY. At 121–139 the chain is on the cytoplasmic side; sequence DRYAAICRPLLYSLIMSRT. The helical transmembrane segment at 140-160 threads the bilayer; it reads VYLKMAAGAFAAGLLNFMVNT. The Extracellular portion of the chain corresponds to 161–196; it reads SHVSSLSFCDSNVIHHFFCDSPPLFKLSCSDTILKE. A helical transmembrane segment spans residues 197–217; that stretch reads SISSILAGVNIVGTLLVILSS. Over 218-237 the chain is Cytoplasmic; sequence YSYVLFSIFSMHSGEGRHRA. A helical transmembrane segment spans residues 238–258; that stretch reads FSTCASHLTAIILFYATCIYT. Residues 259–271 lie on the Extracellular side of the membrane; that stretch reads YLRPSSSYSLNQD. A helical membrane pass occupies residues 272-292; the sequence is KVASVFYTVVIPMLNPLIYSL. Over 293-314 the chain is Cytoplasmic; sequence RSKEVKKALANVISRKRTSSFL.

It belongs to the G-protein coupled receptor 1 family.

The protein resides in the cell membrane. Functionally, odorant receptor. In Homo sapiens (Human), this protein is Olfactory receptor 5F1 (OR5F1).